The following is a 729-amino-acid chain: Ubiquitin carboxyl-terminal hydrolase BAP1 (729 aa).

A UCH catalytic domain is found at 4–235 (GWLELESDPG…IRFNLMAVVP (232 aa)). The short motif at 56 to 60 (RRSRR) is the Arg-finger motif element. C91 serves as the catalytic Nucleophile. H169 acts as the Proton donor in catalysis. S292 is subject to Phosphoserine. The interval 301 to 351 (APAASEGNHTDGAEEAAGSCAQAPSHSPPNKPKLVVKPPGSSLNGVHPNPT) is disordered. Residues 363-366 (NHNY) carry the HBM-like motif motif. Phosphoserine occurs at positions 369 and 395. Disordered stretches follow at residues 372-435 (QEEE…SADG) and 464-524 (SIKT…SPVT). The segment covering 395–409 (SDDEDDYEDDEEDDV) has biased composition (acidic residues). Residues 480–524 (THSQPSPTPSNESTDTASEIGSAFNSPLRSPIRSANPTRPSSPVT) show a composition bias toward polar residues. Position 493 is a phosphothreonine (T493). Residues S521, S537, S585, and S597 each carry the phosphoserine modification. A disordered region spans residues 575 to 623 (LTEGGKGSSPSIRPIQGSQGSSSPVEKEVVEATDSREKTGMVRPGEPLS). Polar residues predominate over residues 582–598 (SSPSIRPIQGSQGSSSP). Residues 596-721 (SSPVEKEVVE…QRKPDRRKRS (126 aa)) form an interaction with BRCA1 region. The segment covering 599–614 (VEKEVVEATDSREKTG) has biased composition (basic and acidic residues). A coiled-coil region spans residues 636 to 656 (LKCVEAEIANYEACLKEEVEK). The tract at residues 642–686 (EIANYEACLKEEVEKRKKFKIDDQRRTHNYDEFICTFISMLAQEG) is interaction with YY1. The ULD domain occupies 670–698 (NYDEFICTFISMLAQEGMLANLVEQNISV). The interval 699 to 701 (RRR) is interaction with nucleosomal DNA forming a DNA clamp with ASXL1. The Classical bipartite Nuclear localization signal (NLS) motif lies at 699–722 (RRRQGVSIGRLHKQRKPDRRKRSR). Residues 703-729 (GVSIGRLHKQRKPDRRKRSRPYKAKRQ) form a disordered region. The interval 713 to 729 (RKPDRRKRSRPYKAKRQ) is positively charged C-terminal extension (CTE). The short motif at 717-724 (RRKRSRPY) is the Non-classical PY-nuclear localization signal (PY-NLS) element.

This sequence belongs to the peptidase C12 family. BAP1 subfamily. As to quaternary structure, core component of the polycomb repressive deubiquitinase (PR-DUB) complex, at least composed of BAP1, one of ASXL1, ASXL2 or (probably) ASXL3, and one of MBD5 or MBD6. The PR-DUB core associates with a number of accessory proteins, including FOXK1, FOXK2, KDM1B, HCFC1, YY1 and OGT; KDM1B specifically associates with ASXL2 PR-DUB complexes. The BAP1 deubiquitinase activity is not required for PR-DUB assembly. Homodimerizes (via coiled-coil hinge-region between the UCH and ULD domains) to mediate assembly of 2 copies of the BAP1-ASXL heterodimer into a bisymmetric tetramer; dimerization enhances association with nucleosomes. The PR-DUB complex associates with nucleosomes to mediate deubiquitination of 'lys-120' of histone H2AK118ub1 substrates; the association requires the positively charged C-terminal tail of BAP1. Interacts (via ULD domain) with ASXL1 (via DEUBAD domain); the interaction is direct and forms a ubiquitin binding cleft. The interaction with ASXL1 stabilizes BAP1 but is not required for nucleosome binding. Associates (via C-terminus) with nucleosome and chromatosome complexes through direct interaction with DNA and the histone3/4 dimer; this association displaces the histone-2A C-terminal tail, extending and orienting the H2AK118ub1 substrate towards the BAP1 deubiquitinase active site. Also interacts (via arginine finger) directly with the histone H2A-H2B acidic patch; this interaction is not critical for nucleosome-chromatosome association but may play a role in orienting the H2AK118ub1 substrate towards the PR-DUB complex active site. Interacts with BRCA1 (via the RING finger). Interacts (via HBM-like motif) with HCFC1. Interacts (via a C-terminal region overlapping the ULD domain) with YY1; the interaction is direct and requires the interaction with HCFC1. Interacts (when phosphorylated at Thr-493) with FOXK1. Interacts (when phosphorylated at Thr-493) with FOXK2; leading to recruitment of the PR-DUB complex and repression of FOXK2 target genes. Interacts (via non-classical PY-NLS) with TNPO1/transportin-1 (via HEAT repeats 8-12); the interaction is direct, mediates BAP1 nuclear localization and disrupts BAP1 homodimerization. Interacts (via C-terminus) with KPNA1/importin alpha5 and KPNA2/importin alpha1; these interactions can contribute to BAP1 nuclear localization but are less important than the interaction with TNPO1/transportin-1. The interaction with TNPO1/transportin-1 disrupts homodimerization and blocks ubiquitination by UBE2O. In terms of processing, ubiquitinated: monoubiquitinated at multiple sites within its nuclear localization signal (NLS) BY UBE2O, leading to cytoplasmic retention. Able to mediate autodeubiquitination via intramolecular interactions to counteract cytoplasmic retention. Monoubiquitinated on at least 4 sites near or within its PY-NLS. As to expression, highly expressed in testis, placenta and ovary. Expressed in breast. levels in the placenta increase over the course of pregnancy.

The protein localises to the cytoplasm. It localises to the nucleus. The protein resides in the chromosome. The enzyme catalyses Thiol-dependent hydrolysis of ester, thioester, amide, peptide and isopeptide bonds formed by the C-terminal Gly of ubiquitin (a 76-residue protein attached to proteins as an intracellular targeting signal).. Functionally, deubiquitinating enzyme that plays a key role in chromatin by mediating deubiquitination of histone H2A and HCFC1. Catalytic component of the polycomb repressive deubiquitinase (PR-DUB) complex, a complex that specifically mediates deubiquitination of histone H2A monoubiquitinated at 'Lys-120' (H2AK119ub1). Does not deubiquitinate monoubiquitinated histone H2B. The PR-DUB complex is an epigenetic regulator of gene expression and acts as a transcriptional coactivator, affecting genes involved in development, cell communication, signaling, cell proliferation and cell viability. Antagonizes PRC1 mediated H2AK119ub1 monoubiquitination. As part of the PR-DUB complex, associates with chromatin enriched in histone marks H3K4me1, H3K4me3, and H3K27Ac, but not in H3K27me3. Recruited to specific gene-regulatory regions by YY1. Acts as a regulator of cell growth by mediating deubiquitination of HCFC1 N-terminal and C-terminal chains, with some specificity toward 'Lys-48'-linked polyubiquitin chains compared to 'Lys-63'-linked polyubiquitin chains. Deubiquitination of HCFC1 does not lead to increase stability of HCFC1. Interferes with the BRCA1 and BARD1 heterodimer activity by inhibiting their ability to mediate ubiquitination and autoubiquitination. It however does not mediate deubiquitination of BRCA1 and BARD1. Able to mediate autodeubiquitination via intramolecular interactions to counteract monoubiquitination at the nuclear localization signal (NLS), thereby protecting it from cytoplasmic sequestration. Negatively regulates epithelial-mesenchymal transition (EMT) of trophoblast stem cells during placental development by regulating genes involved in epithelial cell integrity, cell adhesion and cytoskeletal organization. This chain is Ubiquitin carboxyl-terminal hydrolase BAP1, found in Homo sapiens (Human).